The following is a 1196-amino-acid chain: Major DNA-binding protein (1196 aa).

Residues cysteine 499–histidine 512 fold into a zinc finger. Short sequence motifs (required for filament formation) lie at residues phenylalanine 843–tryptophan 844 and phenylalanine 1142–phenylalanine 1144. Positions arginine 1171 to leucine 1196 are required for nuclear localization. Positions histidine 1176–leucine 1196 are disordered.

The protein belongs to the herpesviridae major DNA-binding protein family. In terms of assembly, homooligomers. Forms double-helical filaments necessary for the formation of replication compartments within the host nucleus. Interacts with the origin-binding protein. Interacts with the helicase primase complex; this interaction stimulates primer synthesis activity of the helicase-primase complex. Interacts with the DNA polymerase. Interacts with the alkaline exonuclease; this interaction increases its nuclease processivity.

It is found in the host nucleus. Plays several crucial roles in viral infection. Participates in the opening of the viral DNA origin to initiate replication by interacting with the origin-binding protein. May disrupt loops, hairpins and other secondary structures present on ssDNA to reduce and eliminate pausing of viral DNA polymerase at specific sites during elongation. Promotes viral DNA recombination by performing strand-transfer, characterized by the ability to transfer a DNA strand from a linear duplex to a complementary single-stranded DNA circle. Can also catalyze the renaturation of complementary single strands. Additionally, reorganizes the host cell nucleus, leading to the formation of prereplicative sites and replication compartments. This process is driven by the protein which can form double-helical filaments in the absence of DNA. The polypeptide is Major DNA-binding protein (Human herpesvirus 2 (strain HG52) (HHV-2)).